The following is a 168-amino-acid chain: MSQQPVAFLTRRETFSACHRLHSPQLSDAENLEVFGKCNNFHGHGHNYTVEITVRGPIDRRTGMVLNITELKEAIETVIMKRLDHKNLDKDVEYFANTPSTTENLAVYIWDNIRLQLKKPELLYEVKIHETPKNIISYRGPYPLNGIYNPINKRIAHDSCTNISSDSD.

Position 19 (histidine 19) interacts with Zn(2+). Catalysis depends on cysteine 38, which acts as the Proton acceptor. Residues histidine 44 and histidine 46 each contribute to the Zn(2+) site. Catalysis depends on charge relay system residues histidine 85 and glutamate 130. Serine 159 is subject to Phosphoserine. At threonine 161 the chain carries Phosphothreonine. Phosphoserine is present on residues serine 164, serine 165, and serine 167.

Belongs to the PTPS family. Homohexamer formed of two homotrimers in a head to head fashion. It depends on Zn(2+) as a cofactor.

The enzyme catalyses 7,8-dihydroneopterin 3'-triphosphate = 6-pyruvoyl-5,6,7,8-tetrahydropterin + triphosphate + H(+). It participates in cofactor biosynthesis; tetrahydrobiopterin biosynthesis; tetrahydrobiopterin from 7,8-dihydroneopterin triphosphate: step 1/3. Required for pigment and biopterin synthesis. This Drosophila melanogaster (Fruit fly) protein is 6-pyruvoyl tetrahydrobiopterin synthase (pr).